Reading from the N-terminus, the 433-residue chain is Enolase (433 aa).

Gln-163 contacts (2R)-2-phosphoglycerate. The active-site Proton donor is the Glu-205. Residues Asp-242, Glu-286, and Asp-313 each coordinate Mg(2+). (2R)-2-phosphoglycerate-binding residues include Lys-338, Arg-367, Ser-368, and Lys-389. Residue Lys-338 is the Proton acceptor of the active site.

This sequence belongs to the enolase family. Mg(2+) serves as cofactor.

It is found in the cytoplasm. The protein localises to the secreted. Its subcellular location is the cell surface. It carries out the reaction (2R)-2-phosphoglycerate = phosphoenolpyruvate + H2O. It functions in the pathway carbohydrate degradation; glycolysis; pyruvate from D-glyceraldehyde 3-phosphate: step 4/5. Its function is as follows. Catalyzes the reversible conversion of 2-phosphoglycerate (2-PG) into phosphoenolpyruvate (PEP). It is essential for the degradation of carbohydrates via glycolysis. The chain is Enolase from Koribacter versatilis (strain Ellin345).